The chain runs to 397 residues: Phosphoglycerate kinase (397 aa).

Substrate-binding positions include 21-23, Arg36, 59-62, Arg119, and Arg156; these read DFN and HLGR. Residues Lys207, Gly295, Glu326, and 353-356 each bind ATP; that span reads GGDS.

This sequence belongs to the phosphoglycerate kinase family. Monomer.

It is found in the cytoplasm. The enzyme catalyses (2R)-3-phosphoglycerate + ATP = (2R)-3-phospho-glyceroyl phosphate + ADP. The protein operates within carbohydrate degradation; glycolysis; pyruvate from D-glyceraldehyde 3-phosphate: step 2/5. This Enterococcus faecalis (strain ATCC 700802 / V583) protein is Phosphoglycerate kinase.